A 370-amino-acid chain; its full sequence is Protein SUPPRESSOR OF NIM1 1 (370 aa).

The F-box domain occupies 1-43; the sequence is MALPWELEEDILSRLPPISLVRFRTVSKHWNSLFNDKTFINNH.

Ubiquitous, at low levels.

Negatively regulates a plant defense signaling pathway which is independent of salicylic acid (SA) and systemic acquired resistance (SAR). Confers sensitivity to P.syringae and P.parasitica. This Arabidopsis thaliana (Mouse-ear cress) protein is Protein SUPPRESSOR OF NIM1 1 (SON1).